The sequence spans 457 residues: Senescence-associated protein OSA15, chloroplastic (457 aa).

A chloroplast-targeting transit peptide spans 1 to 57; sequence MATRIPGTVAASGVYYNDQYRMPCKLKGIHCMALNCIPQKAKVRKCMNGYQSTFRFC.

The protein belongs to the ATA15/OSA15 family. As to expression, expressed in leaves (at protein level).

It localises to the plastid. Its subcellular location is the chloroplast. Functionally, may be involved in the regulation of leaf senescence. This Oryza sativa subsp. japonica (Rice) protein is Senescence-associated protein OSA15, chloroplastic.